Here is a 130-residue protein sequence, read N- to C-terminus: Ribonuclease pancreatic (130 aa).

The N-terminal stretch at 1-6 (VQPSLG) is a signal peptide. Positions 13 and 16 each coordinate substrate. The Proton acceptor role is filled by His-18. 4 cysteine pairs are disulfide-bonded: Cys-32-Cys-90, Cys-46-Cys-101, Cys-64-Cys-116, and Cys-71-Cys-78. An N-linked (GlcNAc...) asparagine glycan is attached at Asn-40. Residues 47–51 (KPVNT), Lys-72, and Arg-91 contribute to the substrate site. His-125 serves as the catalytic Proton donor.

This sequence belongs to the pancreatic ribonuclease family. As to quaternary structure, monomer. Interacts with and forms tight 1:1 complexes with RNH1. Dimerization of two such complexes may occur. Interaction with RNH1 inhibits this protein. In terms of tissue distribution, pancreas.

It localises to the secreted. The enzyme catalyses an [RNA] containing cytidine + H2O = an [RNA]-3'-cytidine-3'-phosphate + a 5'-hydroxy-ribonucleotide-3'-[RNA].. The catalysed reaction is an [RNA] containing uridine + H2O = an [RNA]-3'-uridine-3'-phosphate + a 5'-hydroxy-ribonucleotide-3'-[RNA].. In terms of biological role, endonuclease that catalyzes the cleavage of RNA on the 3' side of pyrimidine nucleotides. Acts on single-stranded and double-stranded RNA. This chain is Ribonuclease pancreatic (RNASE1), found in Cricetulus griseus (Chinese hamster).